The chain runs to 75 residues: Small ribosomal subunit protein bS18 (75 aa).

It belongs to the bacterial ribosomal protein bS18 family. In terms of assembly, part of the 30S ribosomal subunit. Forms a tight heterodimer with protein bS6.

Functionally, binds as a heterodimer with protein bS6 to the central domain of the 16S rRNA, where it helps stabilize the platform of the 30S subunit. This chain is Small ribosomal subunit protein bS18, found in Legionella pneumophila (strain Paris).